The primary structure comprises 79 residues: Small ribosomal subunit protein bS18 (79 aa).

The protein belongs to the bacterial ribosomal protein bS18 family. As to quaternary structure, part of the 30S ribosomal subunit. Forms a tight heterodimer with protein bS6.

Its function is as follows. Binds as a heterodimer with protein bS6 to the central domain of the 16S rRNA, where it helps stabilize the platform of the 30S subunit. This Streptococcus suis (strain 98HAH33) protein is Small ribosomal subunit protein bS18.